A 254-amino-acid polypeptide reads, in one-letter code: MLDFKGKNAVITGGSRGIGRAIALGLAKQGANILISYASHDSEADEVLETASKYGVKAHKVKVDQSDPYESIRFAEKAIETFGKVHILVDNAGICPFEDFFRISVDLFEKVWKVNVESHYFITQRIAKNMIENKINGRILLISSISAHVGGEFQTHYTTTKSALNGFMHSIAIVLGKYGILVNSLEPGTILTDINKEDLSNQEKRAYMERRTVVGRLGLPEDMVAPALFLLSDDNTYVTGTELLADGGMLINLQ.

NADP(+) is bound by residues G13, S15, R16, I18, D64, and N91. The active-site Proton donor is S144. Residues S144, S146, Q154, and Y157 each coordinate beta-L-rhamnose. NADP(+)-binding residues include Y157 and K161. The active-site Proton acceptor is Y157. K161 acts as the Lowers pKa of active site Tyr in catalysis. T189 provides a ligand contact to beta-L-rhamnose. An NADP(+)-binding site is contributed by I190. Residue N195 coordinates beta-L-rhamnose.

The protein belongs to the short-chain dehydrogenases/reductases (SDR) family.

The catalysed reaction is L-rhamnofuranose + NADP(+) = L-rhamnono-1,4-lactone + NADPH + H(+). Its pathway is carbohydrate degradation; L-rhamnose degradation. In terms of biological role, involved in the non-phosphorylated metabolic pathway of L-rhamnose catabolism. Catalyzes the oxidation of L-rhamnose to yield L-rhamnono-1,4-lactone. It can also oxidize L-lyxose and L-mannose, and uses only NADP. The sequence is that of L-rhamnose 1-dehydrogenase (NADP(+)) from Thermoplasma acidophilum (strain ATCC 25905 / DSM 1728 / JCM 9062 / NBRC 15155 / AMRC-C165).